Here is a 285-residue protein sequence, read N- to C-terminus: ATP phosphoribosyltransferase (285 aa).

This sequence belongs to the ATP phosphoribosyltransferase family. Long subfamily. Mg(2+) serves as cofactor.

Its subcellular location is the cytoplasm. The enzyme catalyses 1-(5-phospho-beta-D-ribosyl)-ATP + diphosphate = 5-phospho-alpha-D-ribose 1-diphosphate + ATP. Its pathway is amino-acid biosynthesis; L-histidine biosynthesis; L-histidine from 5-phospho-alpha-D-ribose 1-diphosphate: step 1/9. With respect to regulation, feedback inhibited by histidine. Catalyzes the condensation of ATP and 5-phosphoribose 1-diphosphate to form N'-(5'-phosphoribosyl)-ATP (PR-ATP). Has a crucial role in the pathway because the rate of histidine biosynthesis seems to be controlled primarily by regulation of HisG enzymatic activity. The sequence is that of ATP phosphoribosyltransferase from Streptomyces coelicolor (strain ATCC BAA-471 / A3(2) / M145).